The sequence spans 250 residues: Proteasome subunit alpha type-7-like (250 aa).

The O-linked (GlcNAc) serine glycan is linked to Ser132.

Belongs to the peptidase T1A family. In terms of assembly, the 26S proteasome consists of a 20S proteasome core and two 19S regulatory subunits. The 20S proteasome core is a barrel-shaped complex made of 28 subunits that are arranged in four stacked rings. The two outer rings are each formed by seven alpha subunits, and the two inner rings are formed by seven beta subunits. The proteolytic activity is exerted by three beta-subunits PSMB5, PSMB6 and PSMB7. PSMA7 interacts directly with the PSMG1-PSMG2 heterodimer which promotes 20S proteasome assembly. Interacts with HIF1A. Interacts with RAB7A. Interacts with PRKN. Interacts with ABL1 and ABL2. Interacts with EMAP2. Interacts with MAVS.

Its subcellular location is the cytoplasm. It is found in the nucleus. Component of the 20S core proteasome complex involved in the proteolytic degradation of most intracellular proteins. This complex plays numerous essential roles within the cell by associating with different regulatory particles. Associated with two 19S regulatory particles, forms the 26S proteasome and thus participates in the ATP-dependent degradation of ubiquitinated proteins. The 26S proteasome plays a key role in the maintenance of protein homeostasis by removing misfolded or damaged proteins that could impair cellular functions, and by removing proteins whose functions are no longer required. Associated with the PA200 or PA28, the 20S proteasome mediates ubiquitin-independent protein degradation. This type of proteolysis is required in several pathways including spermatogenesis (20S-PA200 complex) or generation of a subset of MHC class I-presented antigenic peptides (20S-PA28 complex). Inhibits the transactivation function of HIF-1A under both normoxic and hypoxia-mimicking conditions. The interaction with EMAP2 increases the proteasome-mediated HIF-1A degradation under the hypoxic conditions. Plays a role in hepatitis C virus internal ribosome entry site-mediated translation. Mediates nuclear translocation of the androgen receptor (AR) and thereby enhances androgen-mediated transactivation. Promotes MAVS degradation and thereby negatively regulates MAVS-mediated innate immune response. In Macaca fascicularis (Crab-eating macaque), this protein is Proteasome subunit alpha type-7-like (PSMA7L).